We begin with the raw amino-acid sequence, 270 residues long: MDNKIVYVVSDSVGETADLVVRAAMGQFPFAPDIRRVPYVEDTGTLKEVISIAKSNQALICFTLVKPDMRQYLLTEAAKEGVEAYDIIGPLIDQIEEITGQVPRYEPGVVRRLDEEYFKKIEAIEFAVKYDDGRDARGILKADIVLIGISRTSKTPLSQYLAHNKRLKVANVPLVPEVDPPEELYQVAKEKCFGLKIIPDKLNHIRKERLKSLGLSDGATYANINRIQEEIDHFEEVISKINCQVIDVSNKAIEETANIIVNAVQNQKMF.

148–155 (GISRTSKT) contributes to the ADP binding site.

It belongs to the pyruvate, phosphate/water dikinase regulatory protein family. PDRP subfamily.

The enzyme catalyses N(tele)-phospho-L-histidyl/L-threonyl-[pyruvate, phosphate dikinase] + ADP = N(tele)-phospho-L-histidyl/O-phospho-L-threonyl-[pyruvate, phosphate dikinase] + AMP + H(+). It carries out the reaction N(tele)-phospho-L-histidyl/O-phospho-L-threonyl-[pyruvate, phosphate dikinase] + phosphate + H(+) = N(tele)-phospho-L-histidyl/L-threonyl-[pyruvate, phosphate dikinase] + diphosphate. Functionally, bifunctional serine/threonine kinase and phosphorylase involved in the regulation of the pyruvate, phosphate dikinase (PPDK) by catalyzing its phosphorylation/dephosphorylation. In Bacillus mycoides (strain KBAB4) (Bacillus weihenstephanensis), this protein is Putative pyruvate, phosphate dikinase regulatory protein.